We begin with the raw amino-acid sequence, 67 residues long: Large ribosomal subunit protein bL32 (67 aa).

The segment covering M1 to Q19 has biased composition (basic residues). The tract at residues M1–K21 is disordered.

Belongs to the bacterial ribosomal protein bL32 family.

The sequence is that of Large ribosomal subunit protein bL32 from Arthrobacter sp. (strain FB24).